Reading from the N-terminus, the 268-residue chain is Interleukin-1 alpha (268 aa).

Residues 1 to 112 constitute a propeptide that is removed on maturation; that stretch reads MAKVPDLFED…DTEEEIIKPR (112 aa). Position 82 is an N6-acetyllysine (lysine 82). Positions 82 to 86 are nuclear localization signal (NLS); it reads KKRRL. At serine 87 the chain carries Phosphoserine. N-linked (GlcNAc...) asparagine glycosylation is found at asparagine 102 and asparagine 141.

It belongs to the IL-1 family. As to quaternary structure, monomer. Interacts with TMED10; the interaction mediates the translocation from the cytoplasm into the ERGIC (endoplasmic reticulum-Golgi intermediate compartment) and thereby secretion. Interacts with IL1R1. Interacts with S100A13; this interaction is the first step in the export of IL1A, followed by direct translocation of this complex across the plasma membrane. Post-translationally, acetylated within its nuclear localization sequence, which impacts subcellular localization. In terms of processing, proteolytic processed by CAPN1 in a calcium-dependent manner. Cleavage from 31 kDa precursor to 18 kDa biologically active molecules. Phosphorylated. Phosphorylation greatly enhances susceptibility to digestion and promotes the conversion of pre-IL1A alpha to the biologically active IL1A.

The protein resides in the nucleus. The protein localises to the cytoplasm. It is found in the secreted. Functionally, cytokine constitutively present intracellularly in nearly all resting non-hematopoietic cells that plays an important role in inflammation and bridges the innate and adaptive immune systems. After binding to its receptor IL1R1 together with its accessory protein IL1RAP, forms the high affinity interleukin-1 receptor complex. Signaling involves the recruitment of adapter molecules such as MYD88, IRAK1 or IRAK4. In turn, mediates the activation of NF-kappa-B and the three MAPK pathways p38, p42/p44 and JNK pathways. Within the cell, acts as an alarmin and cell death results in its liberation in the extracellular space after disruption of the cell membrane to induce inflammation and alert the host to injury or damage. In addition to its role as a danger signal, which occurs when the cytokine is passively released by cell necrosis, directly senses DNA damage and acts as signal for genotoxic stress without loss of cell integrity. This Lama glama (Llama) protein is Interleukin-1 alpha (IL1A).